Reading from the N-terminus, the 557-residue chain is Urocanate hydratase (557 aa).

NAD(+) is bound by residues 52–53 (GG), glutamine 130, 176–178 (GMG), glutamate 196, 242–243 (NA), 263–267 (QTSAH), 273–274 (YL), and tyrosine 322. Cysteine 410 is an active-site residue. Glycine 492 is a binding site for NAD(+).

The protein belongs to the urocanase family. It depends on NAD(+) as a cofactor.

Its subcellular location is the cytoplasm. The enzyme catalyses 4-imidazolone-5-propanoate = trans-urocanate + H2O. It participates in amino-acid degradation; L-histidine degradation into L-glutamate; N-formimidoyl-L-glutamate from L-histidine: step 2/3. In terms of biological role, catalyzes the conversion of urocanate to 4-imidazolone-5-propionate. The sequence is that of Urocanate hydratase from Rhizobium meliloti (strain 1021) (Ensifer meliloti).